The primary structure comprises 349 residues: Transcription elongation factor A protein 3 (349 aa).

The TFIIS N-terminal domain occupies 5–82; it reads EELLRIAKKL…RNWKQLLDSP (78 aa). A disordered region spans residues 80-170; that stretch reads DSPATPKGEK…RTPSSPSSPT (91 aa). The segment covering 101–110 has biased composition (basic and acidic residues); it reads KGLDCSDWKP. Ser-115 is subject to Phosphoserine. Over residues 121–133 the composition is skewed to basic and acidic residues; sequence RVEEPKDRRDSVD. Composition is skewed to low complexity over residues 134–144 and 160–170; these read SKSSATSSPKR and PRTPSSPSSPT. Ser-141 carries the post-translational modification Phosphoserine. One can recognise a TFIIS central domain in the interval 188 to 304; the sequence is VRDKCVEMLS…EHQMAKTGGT (117 aa). Residues 307–347 form a TFIIS-type zinc finger; sequence DLFQCSKCKKKNCTYNQVQTRSADEPMTTFVLCNECGNRWK. 4 residues coordinate Zn(2+): Cys-311, Cys-314, Cys-339, and Cys-342.

It belongs to the TFS-II family.

It is found in the nucleus. Functionally, necessary for efficient RNA polymerase II transcription elongation past template-encoded arresting sites. The arresting sites in DNA have the property of trapping a certain fraction of elongating RNA polymerases that pass through, resulting in locked ternary complexes. Cleavage of the nascent transcript by S-II allows the resumption of elongation from the new 3'-terminus. The sequence is that of Transcription elongation factor A protein 3 (TCEA3) from Bos taurus (Bovine).